The following is a 578-amino-acid chain: Alpha-(1,6)-fucosyltransferase (578 aa).

Over 1–9 (MRPWTGSWR) the chain is Cytoplasmic. The helical; Signal-anchor for type II membrane protein transmembrane segment at 10-30 (WIMLILFAWGTLLFYIGGHLV) threads the bilayer. Topologically, residues 31–578 (RDNENPDHSS…KYPTYQEAEK (548 aa)) are lumenal. 3 cysteine pairs are disulfide-bonded: C207–C269, C215–C233, and C221–C225. The GT23 domain maps to 209–496 (KAKKLVCNIN…PDASAHFHSL (288 aa)). Residues 302–308 (PRPPYLP) carry the SH3-binding motif. Residues 368-369 (RR) form an important for donor substrate binding region. The cysteines at positions 468 and 475 are disulfide-linked. The region spanning 505-566 (QNAHNQLAIY…PSYKVKEKIE (62 aa)) is the SH3 domain.

The protein belongs to the glycosyltransferase 23 family.

It is found in the golgi apparatus. It localises to the golgi stack membrane. The enzyme catalyses N(4)-{beta-D-GlcNAc-(1-&gt;2)-alpha-D-Man-(1-&gt;3)-[beta-D-GlcNAc-(1-&gt;2)-alpha-D-Man-(1-&gt;6)]-beta-D-Man-(1-&gt;4)-beta-D-GlcNAc-(1-&gt;4)-beta-D-GlcNAc}-L-asparaginyl-[protein] + GDP-beta-L-fucose = an N(4)-{beta-D-GlcNAc-(1-&gt;2)-alpha-D-Man-(1-&gt;3)-[beta-D-GlcNAc-(1-&gt;2)-alpha-D-Man-(1-&gt;6)]-beta-D-Man-(1-&gt;4)-beta-D-GlcNAc-(1-&gt;4)-[alpha-L-Fuc-(1-&gt;6)]-beta-D-GlcNAc}-L-asparaginyl-[protein] + GDP + H(+). Its pathway is protein modification; protein glycosylation. Catalyzes the addition of fucose in alpha 1-6 linkage to the first GlcNAc residue, next to the peptide chains in N-glycans. In Xenopus tropicalis (Western clawed frog), this protein is Alpha-(1,6)-fucosyltransferase (fut8).